The following is a 224-amino-acid chain: Peptidyl-prolyl cis-trans isomerase CYP21-1 (224 aa).

Positions 1–27 (MRREISFLLQPRCLLLLVALTIFLVFA) are cleaved as a signal peptide. Residues 50–214 (FLDVDIDGQR…KKVVIADSGE (165 aa)) form the PPIase cyclophilin-type domain. The N-linked (GlcNAc...) asparagine glycan is linked to Asn-158.

This sequence belongs to the cyclophilin-type PPIase family. Ubiquitous.

The protein localises to the endoplasmic reticulum. It carries out the reaction [protein]-peptidylproline (omega=180) = [protein]-peptidylproline (omega=0). Functionally, PPIases accelerate the folding of proteins. It catalyzes the cis-trans isomerization of proline imidic peptide bonds in oligopeptides. The sequence is that of Peptidyl-prolyl cis-trans isomerase CYP21-1 (CYP21-1) from Arabidopsis thaliana (Mouse-ear cress).